The chain runs to 253 residues: Putative ankyrin repeat protein NMB1133/NMB1171 (253 aa).

2 ANK repeats span residues 196-225 (DGYT…NPAS) and 229-252 (EGYT…LEPR).

The sequence is that of Putative ankyrin repeat protein NMB1133/NMB1171 from Neisseria meningitidis serogroup B (strain ATCC BAA-335 / MC58).